Consider the following 109-residue polypeptide: Phosphoribosyl-ATP pyrophosphatase (109 aa).

It belongs to the PRA-PH family.

The protein resides in the cytoplasm. It catalyses the reaction 1-(5-phospho-beta-D-ribosyl)-ATP + H2O = 1-(5-phospho-beta-D-ribosyl)-5'-AMP + diphosphate + H(+). Its pathway is amino-acid biosynthesis; L-histidine biosynthesis; L-histidine from 5-phospho-alpha-D-ribose 1-diphosphate: step 2/9. This chain is Phosphoribosyl-ATP pyrophosphatase, found in Paramagnetospirillum magneticum (strain ATCC 700264 / AMB-1) (Magnetospirillum magneticum).